The following is a 550-amino-acid chain: Putative pentatricopeptide repeat-containing protein At5g37570 (550 aa).

PPR repeat units lie at residues 73 to 107 (GTYL…GLAR), 109 to 143 (DEYT…GFDK), 144 to 174 (DVVV…MPER), 175 to 205 (NAVS…MPER), 206 to 240 (NLGS…DIIS), 241 to 267 (YTSM…ARGV), 268 to 302 (DVRA…NVKP), 303 to 333 (DEFI…LHQR), 339 to 369 (SHYV…MPQR), 370 to 404 (DLVS…GIVP), 405 to 435 (DEVA…MRKK), and 441 to 475 (SPDH…AHAS). The tract at residues 476–550 (AWGSLLGGCS…KICGRSWISR (75 aa)) is type E motif.

The protein belongs to the PPR family. PCMP-E subfamily.

The polypeptide is Putative pentatricopeptide repeat-containing protein At5g37570 (PCMP-E37) (Arabidopsis thaliana (Mouse-ear cress)).